The chain runs to 940 residues: Valine--tRNA ligase (940 aa).

Residues 47-57 (PNVTGVLHMGH) carry the 'HIGH' region motif. Residues 564–568 (KLSKS) carry the 'KMSKS' region motif. Position 567 (Lys-567) interacts with ATP. Residues 873–905 (EEHLLKEKGRLEKERVRLERAVENLERLLGDES) adopt a coiled-coil conformation.

It belongs to the class-I aminoacyl-tRNA synthetase family. ValS type 1 subfamily. In terms of assembly, monomer.

It localises to the cytoplasm. It catalyses the reaction tRNA(Val) + L-valine + ATP = L-valyl-tRNA(Val) + AMP + diphosphate. In terms of biological role, catalyzes the attachment of valine to tRNA(Val). As ValRS can inadvertently accommodate and process structurally similar amino acids such as threonine, to avoid such errors, it has a 'posttransfer' editing activity that hydrolyzes mischarged Thr-tRNA(Val) in a tRNA-dependent manner. The protein is Valine--tRNA ligase of Chlamydia pneumoniae (Chlamydophila pneumoniae).